Reading from the N-terminus, the 414-residue chain is Lipoyl synthase, mitochondrial (414 aa).

A mitochondrion-targeting transit peptide spans 1–18; it reads MYRRSVGVLFVGRNTRWI. A compositionally biased stretch (polar residues) spans 51 to 67; that stretch reads GNSTEVENATSQLTGTS. Residues 51 to 75 form a disordered region; it reads GNSTEVENATSQLTGTSGKRRKGNR. [4Fe-4S] cluster-binding residues include C150, C155, C161, C181, C185, C188, and S396. One can recognise a Radical SAM core domain in the interval 164–385; sequence GKDKSKATAT…KERALEMGFL (222 aa).

It belongs to the radical SAM superfamily. Lipoyl synthase family. [4Fe-4S] cluster is required as a cofactor.

It localises to the mitochondrion. The enzyme catalyses [[Fe-S] cluster scaffold protein carrying a second [4Fe-4S](2+) cluster] + N(6)-octanoyl-L-lysyl-[protein] + 2 oxidized [2Fe-2S]-[ferredoxin] + 2 S-adenosyl-L-methionine + 4 H(+) = [[Fe-S] cluster scaffold protein] + N(6)-[(R)-dihydrolipoyl]-L-lysyl-[protein] + 4 Fe(3+) + 2 hydrogen sulfide + 2 5'-deoxyadenosine + 2 L-methionine + 2 reduced [2Fe-2S]-[ferredoxin]. The protein operates within protein modification; protein lipoylation via endogenous pathway; protein N(6)-(lipoyl)lysine from octanoyl-[acyl-carrier-protein]: step 2/2. Functionally, catalyzes the radical-mediated insertion of two sulfur atoms into the C-6 and C-8 positions of the octanoyl moiety bound to the lipoyl domains of lipoate-dependent enzymes, thereby converting the octanoylated domains into lipoylated derivatives. The sequence is that of Lipoyl synthase, mitochondrial from Saccharomyces cerevisiae (strain RM11-1a) (Baker's yeast).